A 77-amino-acid chain; its full sequence is uncharacterized protein (77 aa).

Composition is skewed to basic and acidic residues over residues 1 to 24 and 37 to 58; these read CPVAEEHFLVPAHEARGTQGEDQR and EGPKLGEERPKPEAGALEERGP. The segment at 1-77 is disordered; sequence CPVAEEHFLV…RHGPKRKPAK (77 aa). A compositionally biased stretch (basic residues) spans 66–77; sequence RPRHGPKRKPAK.

This is an uncharacterized protein from Macaca fascicularis (Crab-eating macaque).